A 365-amino-acid polypeptide reads, in one-letter code: Uroporphyrinogen decarboxylase (365 aa).

Residues 1–17 (MSANDSPSGQQTTTSAS) show a composition bias toward polar residues. Residues 1–20 (MSANDSPSGQQTTTSASLDA) are disordered. Substrate-binding positions include 48-52 (RQAGR), Asp97, Tyr172, Ser227, and His341.

The protein belongs to the uroporphyrinogen decarboxylase family. Homodimer.

Its subcellular location is the cytoplasm. It carries out the reaction uroporphyrinogen III + 4 H(+) = coproporphyrinogen III + 4 CO2. It participates in porphyrin-containing compound metabolism; protoporphyrin-IX biosynthesis; coproporphyrinogen-III from 5-aminolevulinate: step 4/4. Its function is as follows. Catalyzes the decarboxylation of four acetate groups of uroporphyrinogen-III to yield coproporphyrinogen-III. The polypeptide is Uroporphyrinogen decarboxylase (Streptomyces griseus subsp. griseus (strain JCM 4626 / CBS 651.72 / NBRC 13350 / KCC S-0626 / ISP 5235)).